Consider the following 650-residue polypeptide: ATP-dependent DNA helicase PIF1 (650 aa).

Residues 14-192 (MPSSTEAATD…ALEKRPMESQ (179 aa)) are PINT. Ser40 and Ser164 each carry phosphoserine. Residues 171-199 (LQRAAATKAPDSALEKRPMESQTSTEAPR) form a disordered region. 237 to 244 (GSAGTGKS) is an ATP binding site. The DNA-binding element occupies 586 to 605 (QAYVALSRARSLQGLRVLDF). The tract at residues 631–650 (LESQDDEEANSDLENMDPNL) is disordered. Residues 633-650 (SQDDEEANSDLENMDPNL) show a composition bias toward acidic residues.

It belongs to the helicase family. PIF1 subfamily. Monomer. Interacts with telomerase. Mg(2+) is required as a cofactor.

Its subcellular location is the nucleus. It localises to the mitochondrion. It carries out the reaction Couples ATP hydrolysis with the unwinding of duplex DNA at the replication fork by translocating in the 5'-3' direction. This creates two antiparallel DNA single strands (ssDNA). The leading ssDNA polymer is the template for DNA polymerase III holoenzyme which synthesizes a continuous strand.. It catalyses the reaction ATP + H2O = ADP + phosphate + H(+). In terms of biological role, DNA-dependent ATPase and 5'-3' DNA helicase required for the maintenance of both mitochondrial and nuclear genome stability. Efficiently unwinds G-quadruplex (G4) DNA structures and forked RNA-DNA hybrids. Resolves G4 structures, preventing replication pausing and double-strand breaks (DSBs) at G4 motifs. Involved in the maintenance of telomeric DNA. Inhibits telomere elongation, de novo telomere formation and telomere addition to DSBs via catalytic inhibition of telomerase. Reduces the processivity of telomerase by displacing active telomerase from DNA ends. Releases telomerase by unwinding the short telomerase RNA/telomeric DNA hybrid that is the intermediate in the telomerase reaction. Possesses an intrinsic strand annealing activity. The sequence is that of ATP-dependent DNA helicase PIF1 from Mus musculus (Mouse).